The following is a 165-amino-acid chain: Growth arrest and DNA damage-inducible protein GADD45 alpha (165 aa).

A Phosphothreonine modification is found at T2.

This sequence belongs to the GADD45 family. As to quaternary structure, interacts with MAPK14. Predominantly monomeric but also forms dimers and other oligomers as concentration increases. Interacts with GADD45GIP1. Interacts weakly with PCNA. Interacts with AURKA, likely to compete with dimerization.

It is found in the nucleus. In T-cells, functions as a regulator of p38 MAPKs by inhibiting p88 phosphorylation and activity. Might affect PCNA interaction with some CDK (cell division protein kinase) complexes; stimulates DNA excision repair in vitro and inhibits entry of cells into S phase. In Homo sapiens (Human), this protein is Growth arrest and DNA damage-inducible protein GADD45 alpha (GADD45A).